The primary structure comprises 161 residues: DNA-directed RNA polymerase 18 kDa subunit (161 aa).

The protein belongs to the poxviridae DNA-directed RNA polymerase 18 kDa subunit family. In terms of assembly, the DNA-dependent RNA polymerase used for intermediate and late genes expression consists of eight subunits 147 kDa, 133 kDa, 35 kDa, 30 kDa, 22 kDa, 19 kDa, 18 kDa and 7 kDa totalling more than 500 kDa in mass. The same holoenzyme, with the addition of the transcription-specificity factor RAP94, is used for early gene expression.

It is found in the virion. The enzyme catalyses RNA(n) + a ribonucleoside 5'-triphosphate = RNA(n+1) + diphosphate. Part of the DNA-dependent RNA polymerase which catalyzes the transcription of viral DNA into RNA using the four ribonucleoside triphosphates as substrates. Responsible for the transcription of early, intermediate and late genes. DNA-dependent RNA polymerase associates with the early transcription factor (ETF) thereby allowing the early genes transcription. Late transcription, and probably also intermediate transcription, require newly synthesized RNA polymerase. This is DNA-directed RNA polymerase 18 kDa subunit (RPO18) from Vertebrata (FPV).